A 344-amino-acid polypeptide reads, in one-letter code: Protein RecA (344 aa).

Residue G64–T71 coordinates ATP.

The protein belongs to the RecA family.

The protein resides in the cytoplasm. Can catalyze the hydrolysis of ATP in the presence of single-stranded DNA, the ATP-dependent uptake of single-stranded DNA by duplex DNA, and the ATP-dependent hybridization of homologous single-stranded DNAs. It interacts with LexA causing its activation and leading to its autocatalytic cleavage. The protein is Protein RecA of Paramagnetospirillum magnetotacticum (Aquaspirillum magnetotacticum).